The following is a 724-amino-acid chain: uncharacterized protein (724 aa).

Disordered stretches follow at residues 97 to 131 (RKSF…YPSP), 187 to 252 (ETKI…FETE), 309 to 434 (FETE…TSKL), and 454 to 473 (RGVE…VAEK). Over residues 115 to 128 (TRSASYSESNNSFY) the composition is skewed to polar residues. Positions 187-217 (ETKIGIEEENEESEILAEEKEEEDNDFSVLE) form a coiled coil. The segment covering 193–212 (EEENEESEILAEEKEEEDND) has biased composition (acidic residues). 2 stretches are compositionally biased toward basic and acidic residues: residues 223-252 (QEIK…FETE) and 309-322 (FETE…DHSE). 2 stretches are compositionally biased toward low complexity: residues 323-333 (TTTSETDSTES) and 347-366 (SPQT…SLRS). The span at 367–388 (QPPPPPPSPEHKAPAPPPPPPM) shows a compositional bias: pro residues. Residues 400–410 (FSKTHSTNGDN) are compositionally biased toward polar residues. 2 coiled-coil regions span residues 495 to 522 (SYFQ…HSFQ) and 649 to 678 (MELA…RAKR).

This is an uncharacterized protein from Arabidopsis thaliana (Mouse-ear cress).